Consider the following 187-residue polypeptide: Phosphatidylethanolamine-binding protein 2 (187 aa).

Phosphoserine occurs at positions 13, 52, and 54.

The protein belongs to the phosphatidylethanolamine-binding protein family. Testis specific.

It is found in the cytoplasm. Its function is as follows. May bind to phospholipids. May act as serine protease inhibitor. The protein is Phosphatidylethanolamine-binding protein 2 (Pbp2) of Mus musculus (Mouse).